Here is a 61-residue protein sequence, read N- to C-terminus: Probable tautomerase BH3814 (61 aa).

Pro2 functions as the Proton acceptor; via imino nitrogen in the catalytic mechanism.

Belongs to the 4-oxalocrotonate tautomerase family.

The polypeptide is Probable tautomerase BH3814 (Halalkalibacterium halodurans (strain ATCC BAA-125 / DSM 18197 / FERM 7344 / JCM 9153 / C-125) (Bacillus halodurans)).